The following is a 602-amino-acid chain: Potassium-transporting ATPase potassium-binding subunit (602 aa).

4 consecutive transmembrane segments (helical) span residues 5-25, 65-85, 136-156, and 179-199; these read AMLQ…PLGA, GYAV…YALQ, GLTV…IALI, and LYVL…QGAI. Positions 221-248 are disordered; sequence QDAKGNPVLGKDGKPVMEDKTSQTQTLP. The segment covering 231 to 241 has biased composition (basic and acidic residues); that stretch reads KDGKPVMEDKT. 6 helical membrane-spanning segments follow: residues 283–303, 312–332, 419–439, 458–478, 523–543, and 566–586; these read LANF…CFLF, QGWA…VVET, GLYG…LMVG, AITI…AVSL, IMTG…ILAI, and LFVT…YVPA.

The protein belongs to the KdpA family. In terms of assembly, the system is composed of three essential subunits: KdpA, KdpB and KdpC.

The protein resides in the cell inner membrane. Part of the high-affinity ATP-driven potassium transport (or Kdp) system, which catalyzes the hydrolysis of ATP coupled with the electrogenic transport of potassium into the cytoplasm. This subunit binds the periplasmic potassium ions and delivers the ions to the membrane domain of KdpB through an intramembrane tunnel. The protein is Potassium-transporting ATPase potassium-binding subunit of Chromobacterium violaceum (strain ATCC 12472 / DSM 30191 / JCM 1249 / CCUG 213 / NBRC 12614 / NCIMB 9131 / NCTC 9757 / MK).